Reading from the N-terminus, the 199-residue chain is Recombination protein RecR (199 aa).

A C4-type zinc finger spans residues 58 to 73; the sequence is CSICCNITDTDPCSMC. The 96-residue stretch at 81–176 folds into the Toprim domain; that stretch reads SVICVVEDPR…KVTRIAHGLP (96 aa).

The protein belongs to the RecR family.

Its function is as follows. May play a role in DNA repair. It seems to be involved in an RecBC-independent recombinational process of DNA repair. It may act with RecF and RecO. This Clostridioides difficile (strain 630) (Peptoclostridium difficile) protein is Recombination protein RecR.